We begin with the raw amino-acid sequence, 334 residues long: L-lactate dehydrogenase (334 aa).

The disordered stretch occupies residues 1–22; that stretch reads MASTKGKLIHEMVPSKERDPPH. Residues 8 to 22 are compositionally biased toward basic and acidic residues; it reads LIHEMVPSKERDPPH. NAD(+)-binding positions include 31-59 and R101; that span reads GQVGMAAAISVLLRDLADELALVDVVEDR. Positions 108, 140, and 171 each coordinate substrate. N140 contributes to the NAD(+) binding site. H195 functions as the Proton acceptor in the catalytic mechanism. T250 provides a ligand contact to substrate.

Belongs to the LDH/MDH superfamily. LDH family. Homotetramer.

Its subcellular location is the cytoplasm. The enzyme catalyses (S)-lactate + NAD(+) = pyruvate + NADH + H(+). It participates in fermentation; pyruvate fermentation to lactate; (S)-lactate from pyruvate: step 1/1. This chain is L-lactate dehydrogenase, found in Petromyzon marinus (Sea lamprey).